A 289-amino-acid chain; its full sequence is ATP synthase subunit a (289 aa).

The next 6 membrane-spanning stretches (helical) occupy residues 43 to 63 (AFHLDTLGWSVALGLIFLFIF), 103 to 123 (VIAPLALTIFVWVFLMNAVDL), 160 to 180 (FCVFALIIFYSIKVKGLGGFI), 193 to 213 (IFVQILLIPVNFLLEFVTLIA), 232 to 252 (VFILIAVMFGSGLLWLSGLGV), and 259 to 279 (AVFHILIITLQAFIFMMLTIV).

The protein belongs to the ATPase A chain family. F-type ATPases have 2 components, CF(1) - the catalytic core - and CF(0) - the membrane proton channel. CF(1) has five subunits: alpha(3), beta(3), gamma(1), delta(1), epsilon(1). CF(0) has three main subunits: a(1), b(2) and c(9-12). The alpha and beta chains form an alternating ring which encloses part of the gamma chain. CF(1) is attached to CF(0) by a central stalk formed by the gamma and epsilon chains, while a peripheral stalk is formed by the delta and b chains.

It localises to the cell inner membrane. Its function is as follows. Key component of the proton channel; it plays a direct role in the translocation of protons across the membrane. The chain is ATP synthase subunit a from Pseudomonas putida (strain GB-1).